We begin with the raw amino-acid sequence, 192 residues long: ADP-ribosylation factor-like protein 14 (192 aa).

Residue Gly-2 is the site of N-myristoyl glycine attachment. Residues 20 to 27 (GLDSAGKS), 64 to 68 (DVGGQ), and 124 to 127 (NKQD) each bind GTP.

The protein belongs to the small GTPase superfamily. Arf family. In terms of assembly, interacts with ARL14EP.

Its subcellular location is the cytoplasmic vesicle. Its function is as follows. GTPase that recruits MYO1E to MHC class II-containing vesicles via the effector protein ARL14EP and hence controls the movement of these vesicles along the actin cytoskeleton in dendritic cells. The protein is ADP-ribosylation factor-like protein 14 (Arl14) of Mus musculus (Mouse).